The following is a 510-amino-acid chain: Aspartate kinase FUB3 (510 aa).

2 ACT domains span residues 372 to 440 (ILSN…VLPD) and 446 to 510 (LVGA…KNAI).

Belongs to the aspartokinase family.

It carries out the reaction L-aspartate + ATP = 4-phospho-L-aspartate + ADP. It participates in mycotoxin biosynthesis. Its function is as follows. Aspartate kinase; part of the gene cluster that mediates the biosynthesis of fusaric acid, a mycotoxin with low to moderate toxicity to animals and humans, but with high phytotoxic properties. L-aspartate is suggested as fusaric acid amino acid precursor that is activated and further processed to O-acetyl-L-homoserine by cluster enzymes aspartate kinase FUB3 and homoserine O-acetyltransferase FUB5, as well as enzymes of the primary metabolism. The polyketide synthase (PKS) FUB1 generates the triketide trans-2-hexenal which is presumptively released by the hydrolase FUB4 and linked to the NRPS-bound amino acid precursor by NAD(P)-dependent dehydrogenase FUB6. FUB1, FUB4, and the non-canonical NRPS Fub8 may form an enzyme complex. Further processing of the NRPS-bound intermediate might be carried out by FUB6 and the sulfhydrylase FUB7, enabling a spontaneous electrocyclization to close the carbon backbone of fusaric acid. Dihydrofusaric acid is likely to be released via reduction by the thioester reductase (TR) domain of FUB8 whereupon the final oxidation to fusaric acid may (also) be performed by the FMN-dependent dehydrogenase FUB9. The protein is Aspartate kinase FUB3 of Gibberella fujikuroi (strain CBS 195.34 / IMI 58289 / NRRL A-6831) (Bakanae and foot rot disease fungus).